The chain runs to 177 residues: Large ribosomal subunit protein uL6 (177 aa).

This sequence belongs to the universal ribosomal protein uL6 family. In terms of assembly, part of the 50S ribosomal subunit.

This protein binds to the 23S rRNA, and is important in its secondary structure. It is located near the subunit interface in the base of the L7/L12 stalk, and near the tRNA binding site of the peptidyltransferase center. This is Large ribosomal subunit protein uL6 from Rhizorhabdus wittichii (strain DSM 6014 / CCUG 31198 / JCM 15750 / NBRC 105917 / EY 4224 / RW1) (Sphingomonas wittichii).